The primary structure comprises 210 residues: Protein RFS1 (210 aa).

Residues 4–203 (VAILIYSVDD…RVHQLQGKAF (200 aa)) enclose the Flavodoxin-like domain.

Belongs to the WrbA family.

It is found in the cytoplasm. Its subcellular location is the membrane raft. The polypeptide is Protein RFS1 (RFS1) (Saccharomyces cerevisiae (strain ATCC 204508 / S288c) (Baker's yeast)).